The following is a 297-amino-acid chain: Probable esterase afoC (297 aa).

The Charge relay system role is filled by serine 136. The span at 204 to 217 (ASSSASASVSGSES) shows a compositional bias: low complexity. The tract at residues 204–226 (ASSSASASVSGSESAGEEEEDGH) is disordered. Active-site charge relay system residues include aspartate 240 and histidine 267.

The protein belongs to the LovG family.

Its function is as follows. Probable esterase; part of the gene cluster that mediates the biosynthesis of asperfuranone, a probable antitumor agent. The polyketide synthase afoG is responsible for producing the 3,5-dimethyloctadienone moiety from acetyl-CoA, three malonyl-CoA, and two S-adenosyl methionines (SAM). The 3,5-dimethyloctadienone moiety is then loaded onto the SAT domain of afoE and extended with four malonyl-CoA and one SAM, which leads to the formation of 2,4-dihydroxy-6-(5,7-dimethyl-2-oxo-trans-3-trans-5-nonadienyl)-3-methylbenzaldehyde (compound 2) after reductive release and aldol condensation. AfoD is the next enzyme in the biosynthesis sequence and hydroxylates the side chain at the benzylic position of compound 2. After benzylic hydroxylation, a furan ring is formed after five-member ring hemiacetal formation and water elimination. AfoF and afoC are proposed to oxidize the R-diketone proton and to reduce the unconjugated carbonyl group, respectively, to generate asperfuranone. Since no intermediates could be isolated from afoF and afoC deletants, the sequence of these two enzymes is not fully understood. Moreover, since afoC deletant still produces a small amount of asperfuranone, other endogenous oxidoreductases might catalyze the same reaction with much less efficiency. The sequence is that of Probable esterase afoC from Emericella nidulans (strain FGSC A4 / ATCC 38163 / CBS 112.46 / NRRL 194 / M139) (Aspergillus nidulans).